The following is a 183-amino-acid chain: tRNA-splicing endonuclease (183 aa).

Catalysis depends on residues tyrosine 120, histidine 128, and lysine 159.

It belongs to the tRNA-intron endonuclease family. Archaeal short subfamily. In terms of assembly, homotetramer; although the tetramer contains four active sites, only two participate in the cleavage. Therefore, it should be considered as a dimer of dimers.

The catalysed reaction is pretRNA = a 3'-half-tRNA molecule with a 5'-OH end + a 5'-half-tRNA molecule with a 2',3'-cyclic phosphate end + an intron with a 2',3'-cyclic phosphate and a 5'-hydroxyl terminus.. In terms of biological role, endonuclease that removes tRNA introns. Cleaves pre-tRNA at the 5'- and 3'-splice sites to release the intron. The products are an intron and two tRNA half-molecules bearing 2',3' cyclic phosphate and 5'-OH termini. Recognizes a pseudosymmetric substrate in which 2 bulged loops of 3 bases are separated by a stem of 4 bp. The sequence is that of tRNA-splicing endonuclease from Pyrobaculum aerophilum (strain ATCC 51768 / DSM 7523 / JCM 9630 / CIP 104966 / NBRC 100827 / IM2).